Here is a 395-residue protein sequence, read N- to C-terminus: Phosphoglycerate kinase (395 aa).

Residues aspartate 22–asparagine 24, arginine 38, histidine 61–arginine 64, arginine 119, and arginine 152 contribute to the substrate site. ATP-binding positions include lysine 203, glycine 294, glutamate 325, and glycine 351–threonine 354.

Belongs to the phosphoglycerate kinase family. Monomer.

The protein localises to the cytoplasm. The catalysed reaction is (2R)-3-phosphoglycerate + ATP = (2R)-3-phospho-glyceroyl phosphate + ADP. It functions in the pathway carbohydrate degradation; glycolysis; pyruvate from D-glyceraldehyde 3-phosphate: step 2/5. The sequence is that of Phosphoglycerate kinase from Hydrogenobaculum sp. (strain Y04AAS1).